The primary structure comprises 422 residues: Cysteate synthase (422 aa).

An N6-(pyridoxal phosphate)lysine modification is found at Lys105. Pyridoxal 5'-phosphate-binding residues include Asn131 and Thr379.

The protein belongs to the threonine synthase family. Cysteate synthase subfamily. As to quaternary structure, homotrimer. Requires pyridoxal 5'-phosphate as cofactor.

The catalysed reaction is O-phospho-L-serine + sulfite + H(+) = L-cysteate + phosphate. It participates in cofactor biosynthesis; coenzyme M biosynthesis. Specifically catalyzes the beta-elimination of phosphate from L-phosphoserine and the beta-addition of sulfite to the dehydroalanine intermediate to produce L-cysteate. This is Cysteate synthase from Methanospirillum hungatei JF-1 (strain ATCC 27890 / DSM 864 / NBRC 100397 / JF-1).